Here is a 471-residue protein sequence, read N- to C-terminus: Alpha-galactosidase 2 (471 aa).

The signal sequence occupies residues 1–18 (MFAFYFLTACISLKGVFG). C42 and C74 are oxidised to a cystine. D72 and D73 together coordinate substrate. N-linked (GlcNAc...) asparagine glycosylation occurs at N105. C121 and C151 are disulfide-bonded. Position 147 (K147) interacts with substrate. D149 functions as the Nucleophile in the catalytic mechanism. N175 carries an N-linked (GlcNAc...) asparagine glycan. Residue R205 coordinates substrate. Residue D209 is the Proton donor of the active site. 2 disulfide bridges follow: C221–C237 and C223–C230. Substrate is bound at residue Q251. Residues N270, N370, N403, N413, N422, N435, and N454 are each glycosylated (N-linked (GlcNAc...) asparagine).

It belongs to the glycosyl hydrolase 27 family. As to quaternary structure, homotetramer.

It is found in the secreted. The enzyme catalyses Hydrolysis of terminal, non-reducing alpha-D-galactose residues in alpha-D-galactosides, including galactose oligosaccharides, galactomannans and galactolipids.. The sequence is that of Alpha-galactosidase 2 (MEL2) from Saccharomyces cerevisiae (Baker's yeast).